The chain runs to 70 residues: Translational regulator CsrA (70 aa).

This sequence belongs to the CsrA/RsmA family. As to quaternary structure, homodimer; the beta-strands of each monomer intercalate to form a hydrophobic core, while the alpha-helices form wings that extend away from the core.

It is found in the cytoplasm. Its function is as follows. A translational regulator that binds mRNA to regulate translation initiation and/or mRNA stability. Usually binds in the 5'-UTR at or near the Shine-Dalgarno sequence preventing ribosome-binding, thus repressing translation. Its main target seems to be the major flagellin gene, while its function is anatagonized by FliW. The chain is Translational regulator CsrA from Rhodopirellula baltica (strain DSM 10527 / NCIMB 13988 / SH1).